Reading from the N-terminus, the 31-residue chain is Photosystem II reaction center protein T (31 aa).

The helical transmembrane segment at S3 to F23 threads the bilayer.

The protein belongs to the PsbT family. In terms of assembly, PSII is composed of 1 copy each of membrane proteins PsbA, PsbB, PsbC, PsbD, PsbE, PsbF, PsbH, PsbI, PsbJ, PsbK, PsbL, PsbM, PsbT, PsbX, PsbY, PsbZ, Psb30/Ycf12, peripheral proteins PsbO, CyanoQ (PsbQ), PsbU, PsbV and a large number of cofactors. It forms dimeric complexes.

The protein localises to the cellular thylakoid membrane. Functionally, found at the monomer-monomer interface of the photosystem II (PS II) dimer, plays a role in assembly and dimerization of PSII. PSII is a light-driven water plastoquinone oxidoreductase, using light energy to abstract electrons from H(2)O, generating a proton gradient subsequently used for ATP formation. This is Photosystem II reaction center protein T from Synechococcus sp. (strain WH7803).